The primary structure comprises 177 residues: Translation initiation factor IF-3 (177 aa).

It belongs to the IF-3 family. Monomer.

It localises to the cytoplasm. In terms of biological role, IF-3 binds to the 30S ribosomal subunit and shifts the equilibrium between 70S ribosomes and their 50S and 30S subunits in favor of the free subunits, thus enhancing the availability of 30S subunits on which protein synthesis initiation begins. This is Translation initiation factor IF-3 from Nitratiruptor sp. (strain SB155-2).